A 507-amino-acid polypeptide reads, in one-letter code: MLWYIVAGAGGLLIGYLIANYQINQKLRKAKEDAQTIIEKAEKEANEIKKKAIIEGREEVHRLREEFEKERSRREEELRALEERLLKREELLTRKEENLEKREQQVEELKANLEEKMREVEEKEKRIDEELKRLAGMTVEEARELILEEARQRYEHDLAKLYKEMKEQVEEEAEKEAKKVIAFAVQRYAPDYVGEITVSTVSLPSDDMKGRIIGREGRNIRTFEKITGVDLIIDDTPEVVVLSCFNPLRREIARITLEKLVADGRIHPARIEEMYEKAKQEVEKAIKEAGQEATFKAGVMGLHPELVKLLGKLKYRTSYGQNVLNHSIEVALLAGYMASELGLNADKARRGGLLHDIGKAVDQELEGSHTTIGAELARRYGEKEDIINMILSHHGEEEPMTPEAVLVAAADALSAARPGARRESLENYIKRLMKLEEIAKSFKYVEKAYAIQAGREIRVIVEPDKVDDALAEKLAYDISKKIEEELEYPGVLKVVVIREKRSVAYAK.

The helical transmembrane segment at 1–21 (MLWYIVAGAGGLLIGYLIANY) threads the bilayer. The KH domain maps to 197 to 282 (TVSTVSLPSD…EMYEKAKQEV (86 aa)). An HD domain is found at 323–416 (VLNHSIEVAL…VAAADALSAA (94 aa)).

This sequence belongs to the RNase Y family.

Its subcellular location is the cell membrane. Functionally, endoribonuclease that initiates mRNA decay. This is Ribonuclease Y from Thermotoga sp. (strain RQ2).